A 319-amino-acid chain; its full sequence is ATP-dependent 6-phosphofructokinase (319 aa).

An ATP-binding site is contributed by G11. 21-25 is a binding site for ADP; it reads RAVVR. Residues 72-73 and 102-105 contribute to the ATP site; these read RC and GDGS. D103 lines the Mg(2+) pocket. 125–127 provides a ligand contact to substrate; that stretch reads TID. Residue D127 is the Proton acceptor of the active site. ADP is bound at residue R154. Substrate-binding positions include R162 and 169–171; that span reads MGR. Residues 185–187, R211, and 213–215 contribute to the ADP site; these read GAE and KKH. Residues E222, R243, and 249 to 252 contribute to the substrate site; that span reads HVQR.

Belongs to the phosphofructokinase type A (PFKA) family. ATP-dependent PFK group I subfamily. Prokaryotic clade 'B1' sub-subfamily. Homotetramer. It depends on Mg(2+) as a cofactor.

The protein localises to the cytoplasm. The catalysed reaction is beta-D-fructose 6-phosphate + ATP = beta-D-fructose 1,6-bisphosphate + ADP + H(+). It participates in carbohydrate degradation; glycolysis; D-glyceraldehyde 3-phosphate and glycerone phosphate from D-glucose: step 3/4. With respect to regulation, allosterically activated by ADP and other diphosphonucleosides, and allosterically inhibited by phosphoenolpyruvate. Functionally, catalyzes the phosphorylation of D-fructose 6-phosphate to fructose 1,6-bisphosphate by ATP, the first committing step of glycolysis. The sequence is that of ATP-dependent 6-phosphofructokinase from Anoxybacillus flavithermus (strain DSM 21510 / WK1).